Reading from the N-terminus, the 93-residue chain is Pyrimidine/purine nucleoside phosphorylase (93 aa).

Belongs to the nucleoside phosphorylase PpnP family.

It catalyses the reaction a purine D-ribonucleoside + phosphate = a purine nucleobase + alpha-D-ribose 1-phosphate. The catalysed reaction is adenosine + phosphate = alpha-D-ribose 1-phosphate + adenine. The enzyme catalyses cytidine + phosphate = cytosine + alpha-D-ribose 1-phosphate. It carries out the reaction guanosine + phosphate = alpha-D-ribose 1-phosphate + guanine. It catalyses the reaction inosine + phosphate = alpha-D-ribose 1-phosphate + hypoxanthine. The catalysed reaction is thymidine + phosphate = 2-deoxy-alpha-D-ribose 1-phosphate + thymine. The enzyme catalyses uridine + phosphate = alpha-D-ribose 1-phosphate + uracil. It carries out the reaction xanthosine + phosphate = alpha-D-ribose 1-phosphate + xanthine. Its function is as follows. Catalyzes the phosphorolysis of diverse nucleosides, yielding D-ribose 1-phosphate and the respective free bases. Can use uridine, adenosine, guanosine, cytidine, thymidine, inosine and xanthosine as substrates. Also catalyzes the reverse reactions. This is Pyrimidine/purine nucleoside phosphorylase from Pseudomonas syringae pv. tomato (strain ATCC BAA-871 / DC3000).